We begin with the raw amino-acid sequence, 303 residues long: Oxygen-dependent coproporphyrinogen-III oxidase (303 aa).

Serine 93 lines the substrate pocket. The a divalent metal cation site is built by histidine 97 and histidine 107. Residue histidine 107 is the Proton donor of the active site. 109–111 contributes to the substrate binding site; the sequence is NVR. Histidine 149 and histidine 179 together coordinate a divalent metal cation. The interval 244-279 is important for dimerization; the sequence is YVEFNLVFDRGTLFGLQSGGRTESILLSMPPLAQWR. 262-264 serves as a coordination point for substrate; it reads GGR.

This sequence belongs to the aerobic coproporphyrinogen-III oxidase family. As to quaternary structure, homodimer. Requires a divalent metal cation as cofactor.

It is found in the cytoplasm. The enzyme catalyses coproporphyrinogen III + O2 + 2 H(+) = protoporphyrinogen IX + 2 CO2 + 2 H2O. It functions in the pathway porphyrin-containing compound metabolism; protoporphyrin-IX biosynthesis; protoporphyrinogen-IX from coproporphyrinogen-III (O2 route): step 1/1. Functionally, involved in the heme biosynthesis. Catalyzes the aerobic oxidative decarboxylation of propionate groups of rings A and B of coproporphyrinogen-III to yield the vinyl groups in protoporphyrinogen-IX. This Bordetella parapertussis (strain 12822 / ATCC BAA-587 / NCTC 13253) protein is Oxygen-dependent coproporphyrinogen-III oxidase.